The following is a 229-amino-acid chain: Cytidylate kinase (229 aa).

15–23 is an ATP binding site; that stretch reads GPAASGKST.

Belongs to the cytidylate kinase family. Type 1 subfamily.

It localises to the cytoplasm. The enzyme catalyses CMP + ATP = CDP + ADP. It carries out the reaction dCMP + ATP = dCDP + ADP. In Herpetosiphon aurantiacus (strain ATCC 23779 / DSM 785 / 114-95), this protein is Cytidylate kinase.